The sequence spans 275 residues: Hemin import ATP-binding protein HmuV (275 aa).

One can recognise an ABC transporter domain in the interval 2 to 242; it reads LKAAGIGVRL…EWIETGFGLQ (241 aa). Residue 34 to 41 coordinates ATP; that stretch reads GPNGAGKS.

It belongs to the ABC transporter superfamily. Heme (hemin) importer (TC 3.A.1.14.5) family. As to quaternary structure, the complex is composed of two ATP-binding proteins (HmuV), two transmembrane proteins (HmuU) and a solute-binding protein (HmuT).

Its subcellular location is the cell inner membrane. Functionally, part of the ABC transporter complex HmuTUV involved in hemin import. Responsible for energy coupling to the transport system. This Gloeobacter violaceus (strain ATCC 29082 / PCC 7421) protein is Hemin import ATP-binding protein HmuV.